Here is a 295-residue protein sequence, read N- to C-terminus: Pyridoxal 5'-phosphate synthase subunit PdxS (295 aa).

Asp-25 lines the D-ribose 5-phosphate pocket. The Schiff-base intermediate with D-ribose 5-phosphate role is filled by Lys-82. Gly-154 provides a ligand contact to D-ribose 5-phosphate. A D-glyceraldehyde 3-phosphate-binding site is contributed by Arg-166. D-ribose 5-phosphate is bound by residues Gly-215 and 236–237 (GS).

Belongs to the PdxS/SNZ family. In terms of assembly, in the presence of PdxT, forms a dodecamer of heterodimers.

The enzyme catalyses aldehydo-D-ribose 5-phosphate + D-glyceraldehyde 3-phosphate + L-glutamine = pyridoxal 5'-phosphate + L-glutamate + phosphate + 3 H2O + H(+). The protein operates within cofactor biosynthesis; pyridoxal 5'-phosphate biosynthesis. Catalyzes the formation of pyridoxal 5'-phosphate from ribose 5-phosphate (RBP), glyceraldehyde 3-phosphate (G3P) and ammonia. The ammonia is provided by the PdxT subunit. Can also use ribulose 5-phosphate and dihydroxyacetone phosphate as substrates, resulting from enzyme-catalyzed isomerization of RBP and G3P, respectively. The sequence is that of Pyridoxal 5'-phosphate synthase subunit PdxS from Bacillus cytotoxicus (strain DSM 22905 / CIP 110041 / 391-98 / NVH 391-98).